Consider the following 216-residue polypeptide: MHVIYGGTFDPIHHGHLRLALEVSEALEVSRVHLVPSHIPPHRGSTGASSAQRLEMIRQAIAGEPALALDEQEVHRGGASYTADTLRQLRAELGPDCPLVMVVGTDAFSSFDRWREWQEIPGLAHIVVVRRPGSELPVGSEAAQLVAERCVGSASELHSRPAGLVLELAPPLLDISATGIRRRIAAGRSPRYLTPDDVCQSIRAWGLYGARPVEGQ.

Belongs to the NadD family.

The catalysed reaction is nicotinate beta-D-ribonucleotide + ATP + H(+) = deamido-NAD(+) + diphosphate. It functions in the pathway cofactor biosynthesis; NAD(+) biosynthesis; deamido-NAD(+) from nicotinate D-ribonucleotide: step 1/1. In terms of biological role, catalyzes the reversible adenylation of nicotinate mononucleotide (NaMN) to nicotinic acid adenine dinucleotide (NaAD). The sequence is that of Probable nicotinate-nucleotide adenylyltransferase from Marinobacter nauticus (strain ATCC 700491 / DSM 11845 / VT8) (Marinobacter aquaeolei).